We begin with the raw amino-acid sequence, 37 residues long: Large ribosomal subunit protein bL36c (37 aa).

Belongs to the bacterial ribosomal protein bL36 family.

It localises to the plastid. It is found in the chloroplast. In Gracilaria tenuistipitata var. liui (Red alga), this protein is Large ribosomal subunit protein bL36c.